Consider the following 258-residue polypeptide: UPF0246 protein YaaA (258 aa).

The protein belongs to the UPF0246 family.

The sequence is that of UPF0246 protein YaaA from Escherichia coli O7:K1 (strain IAI39 / ExPEC).